The chain runs to 150 residues: MKRVRVKVIFVSFGLLVVFLSLSGTAADCPSSWSSYEGHCYKPFNEGKNWADAENFCTQQHTGGHLVSFHSTEEADFVVKLAFQTFGHSIFWIGLSNVWNKCSWQWSNGAMLKYEDWAEESYCVYFKSTNNKWRSRACRMLARFVCEFQA.

Positions M1 to A27 are cleaved as a signal peptide. 3 disulfide bridges follow: C29–C40, C57–C146, and C123–C138. The 112-residue stretch at Y36–E147 folds into the C-type lectin domain.

The protein belongs to the snaclec family. Heteromultimer; disulfide-linked. In terms of tissue distribution, expressed by the venom gland.

It is found in the secreted. Functionally, interferes with one step of hemostasis (modulation of platelet aggregation, or coagulation cascade, for example). In Crotalus adamanteus (Eastern diamondback rattlesnake), this protein is C-type lectin 16.